The chain runs to 134 residues: ATP synthase epsilon chain (134 aa).

Residues 94-104 (AKLAKSRAESH) are compositionally biased toward basic and acidic residues. A disordered region spans residues 94–115 (AKLAKSRAESHLEEDDDNTDIN).

This sequence belongs to the ATPase epsilon chain family. F-type ATPases have 2 components, CF(1) - the catalytic core - and CF(0) - the membrane proton channel. CF(1) has five subunits: alpha(3), beta(3), gamma(1), delta(1), epsilon(1). CF(0) has three main subunits: a, b and c.

The protein localises to the cell membrane. Its function is as follows. Produces ATP from ADP in the presence of a proton gradient across the membrane. The sequence is that of ATP synthase epsilon chain from Staphylococcus epidermidis (strain ATCC 35984 / DSM 28319 / BCRC 17069 / CCUG 31568 / BM 3577 / RP62A).